The primary structure comprises 37 residues: TFINHKCKSSSECLPACKAAIGRASGKCINSTCKCYY.

2 disulfide bridges follow: C13-C33 and C17-C35.

The protein belongs to the short scorpion toxin superfamily. Potassium channel inhibitor family. Alpha-KTx 04 subfamily. In terms of tissue distribution, expressed by the venom gland.

The protein localises to the secreted. In terms of biological role, reversible blocker of voltage-gated potassium channel Kv1.2/KCNA2 (Kd=65 nM) and calcium-activated potassium channels KCa2.2/KCNN2 (Kd=575 nM) and KCa3.1/KCNN4 (Kd=59 nM). The polypeptide is Potassium channel toxin alpha-KTx 4.8 (Centruroides margaritatus (Central American bark Scorpion)).